Reading from the N-terminus, the 477-residue chain is Glycogen synthase (477 aa).

Lysine 15 serves as a coordination point for ADP-alpha-D-glucose.

It belongs to the glycosyltransferase 1 family. Bacterial/plant glycogen synthase subfamily.

It carries out the reaction [(1-&gt;4)-alpha-D-glucosyl](n) + ADP-alpha-D-glucose = [(1-&gt;4)-alpha-D-glucosyl](n+1) + ADP + H(+). It functions in the pathway glycan biosynthesis; glycogen biosynthesis. Its function is as follows. Synthesizes alpha-1,4-glucan chains using ADP-glucose. This Streptococcus pneumoniae serotype 4 (strain ATCC BAA-334 / TIGR4) protein is Glycogen synthase.